The following is a 477-amino-acid chain: 3-isopropylmalate dehydratase large subunit (477 aa).

Residues Cys347, Cys407, and Cys410 each contribute to the [4Fe-4S] cluster site. A disordered region spans residues 418–442; the sequence is LAPGERSASTSNRNFEGRQGKGGRT.

The protein belongs to the aconitase/IPM isomerase family. LeuC type 1 subfamily. Heterodimer of LeuC and LeuD. The cofactor is [4Fe-4S] cluster.

The catalysed reaction is (2R,3S)-3-isopropylmalate = (2S)-2-isopropylmalate. It participates in amino-acid biosynthesis; L-leucine biosynthesis; L-leucine from 3-methyl-2-oxobutanoate: step 2/4. Functionally, catalyzes the isomerization between 2-isopropylmalate and 3-isopropylmalate, via the formation of 2-isopropylmaleate. This is 3-isopropylmalate dehydratase large subunit from Streptomyces avermitilis (strain ATCC 31267 / DSM 46492 / JCM 5070 / NBRC 14893 / NCIMB 12804 / NRRL 8165 / MA-4680).